Consider the following 246-residue polypeptide: Probable transcriptional regulatory protein RD1_2018 (246 aa).

The protein belongs to the TACO1 family.

The protein resides in the cytoplasm. This is Probable transcriptional regulatory protein RD1_2018 from Roseobacter denitrificans (strain ATCC 33942 / OCh 114) (Erythrobacter sp. (strain OCh 114)).